Here is a 141-residue protein sequence, read N- to C-terminus: Large ribosomal subunit protein bL17 (141 aa).

The interval 120-141 is disordered; that stretch reads TSAKGQDSGPVLTADEDEFEAA.

Belongs to the bacterial ribosomal protein bL17 family. As to quaternary structure, part of the 50S ribosomal subunit. Contacts protein L32.

This Novosphingobium aromaticivorans (strain ATCC 700278 / DSM 12444 / CCUG 56034 / CIP 105152 / NBRC 16084 / F199) protein is Large ribosomal subunit protein bL17.